We begin with the raw amino-acid sequence, 229 residues long: Cytidylate kinase (229 aa).

12–20 (GPSGTGKSS) is an ATP binding site.

Belongs to the cytidylate kinase family. Type 1 subfamily.

It localises to the cytoplasm. The catalysed reaction is CMP + ATP = CDP + ADP. The enzyme catalyses dCMP + ATP = dCDP + ADP. This is Cytidylate kinase from Rhodococcus opacus (strain B4).